Here is a 179-residue protein sequence, read N- to C-terminus: Large ribosomal subunit protein uL5 (179 aa).

Belongs to the universal ribosomal protein uL5 family. Part of the 50S ribosomal subunit; part of the 5S rRNA/L5/L18/L25 subcomplex. Contacts the 5S rRNA and the P site tRNA. Forms a bridge to the 30S subunit in the 70S ribosome.

This is one of the proteins that bind and probably mediate the attachment of the 5S RNA into the large ribosomal subunit, where it forms part of the central protuberance. In the 70S ribosome it contacts protein S13 of the 30S subunit (bridge B1b), connecting the 2 subunits; this bridge is implicated in subunit movement. Contacts the P site tRNA; the 5S rRNA and some of its associated proteins might help stabilize positioning of ribosome-bound tRNAs. The protein is Large ribosomal subunit protein uL5 of Staphylococcus saprophyticus subsp. saprophyticus (strain ATCC 15305 / DSM 20229 / NCIMB 8711 / NCTC 7292 / S-41).